A 518-amino-acid polypeptide reads, in one-letter code: Protein translocase subunit SecD (518 aa).

Transmembrane regions (helical) follow at residues 9–29 (IVLS…NFIQ), 356–376 (GKKA…LSYG), 377–397 (VIGL…LALL), 406–426 (LPGI…NVLI), 463–483 (LIVA…FAVA), and 486–506 (IGII…IDVW).

Belongs to the SecD/SecF family. SecD subfamily. Forms a complex with SecF. Part of the essential Sec protein translocation apparatus which comprises SecA, SecYEG and auxiliary proteins SecDF-YajC and YidC.

The protein localises to the cell inner membrane. Its function is as follows. Part of the Sec protein translocase complex. Interacts with the SecYEG preprotein conducting channel. SecDF uses the proton motive force (PMF) to complete protein translocation after the ATP-dependent function of SecA. The protein is Protein translocase subunit SecD of Rickettsia prowazekii (strain Madrid E).